A 106-amino-acid chain; its full sequence is Hydrogenase expression/formation protein HoxL (106 aa).

This sequence belongs to the HupF/HypC family.

This Azotobacter vinelandii protein is Hydrogenase expression/formation protein HoxL (hoxL).